The sequence spans 475 residues: Sensor histidine kinase GlrK (475 aa).

Residues Met-1–Gln-13 lie on the Cytoplasmic side of the membrane. The chain crosses the membrane as a helical span at residues Leu-14–Trp-34. Residues Gln-35–Gln-173 are Periplasmic-facing. A helical membrane pass occupies residues Tyr-174 to Thr-194. Topologically, residues Arg-195–Lys-475 are cytoplasmic. The Histidine kinase domain maps to His-256 to Lys-472. His-259 carries the phosphohistidine; by autocatalysis modification.

Autophosphorylated.

The protein localises to the cell inner membrane. It catalyses the reaction ATP + protein L-histidine = ADP + protein N-phospho-L-histidine.. Its function is as follows. Member of the two-component regulatory system GlrR/GlrK that up-regulates transcription of the glmY sRNA when cells enter the stationary growth phase. Activates GlrR by phosphorylation. This Escherichia coli (strain K12) protein is Sensor histidine kinase GlrK (glrK).